Consider the following 146-residue polypeptide: uncharacterized protein (146 aa).

This is an uncharacterized protein from Escherichia coli O157:H7.